Reading from the N-terminus, the 1976-residue chain is Protein TIC 214 (1976 aa).

Helical transmembrane passes span 11–31, 64–84, 87–107, 126–146, 173–193, and 221–241; these read LLLL…YYGF, FIMG…HLAL, PHTL…FFWN, LSIQ…HFVL, FFGW…VLSW, and IFSI…PSPI. A compositionally biased stretch (acidic residues) spans 619-635; that stretch reads FEEEEEEEEEDDQEEST. Disordered regions lie at residues 619-642 and 830-861; these read FEEE…GIRS and SSYV…EDKR. Over residues 836–861 the composition is skewed to basic and acidic residues; it reads GAKEKEKIEEEHEEEKGEYKRKEDKR. 2 helical membrane-spanning segments follow: residues 1054-1074 and 1202-1222; these read IIKI…FFVL and IYMS…QFFL. Over residues 1633–1665 the composition is skewed to basic and acidic residues; that stretch reads QKERFHPKPKVESNQKGYLELENRNRDEKERQH. The segment at 1633–1669 is disordered; it reads QKERFHPKPKVESNQKGYLELENRNRDEKERQHQGNL.

Belongs to the TIC214 family. Part of the Tic complex.

It localises to the plastid. It is found in the chloroplast inner membrane. Its function is as follows. Involved in protein precursor import into chloroplasts. May be part of an intermediate translocation complex acting as a protein-conducting channel at the inner envelope. The sequence is that of Protein TIC 214 from Nymphaea alba (White water-lily).